A 149-amino-acid chain; its full sequence is Calmodulin (149 aa).

Residue Thr-2 is modified to N-acetylthreonine. EF-hand domains lie at 8–43 (EQIA…LGQN), 44–79 (PTEA…KMKE), 81–116 (DSEE…LGEK), and 117–149 (LTDE…MTSK). 14 residues coordinate Ca(2+): Asp-21, Asp-23, Asp-25, Thr-27, Glu-32, Asp-57, Asp-59, Asn-61, Thr-63, Glu-68, Asp-94, Asp-96, Asn-98, and Glu-105. Lys-116 carries the N6,N6,N6-trimethyllysine modification. The Ca(2+) site is built by Asp-130, Asp-132, Asp-134, Gln-136, and Glu-141.

Belongs to the calmodulin family.

Calmodulin mediates the control of a large number of enzymes, ion channels and other proteins by Ca(2+). Among the enzymes to be stimulated by the calmodulin-Ca(2+) complex are a number of protein kinases and phosphatases. This Halichondria okadai (Marine sponge) protein is Calmodulin.